We begin with the raw amino-acid sequence, 185 residues long: MAEDRFPGWHGTTILAVRRGGEVVVAGDGQVSLGQTVIKGTARKVRRLSPGGHEVVAGFAGSTADAFTLLERLEKKLEAAPGQLARACVELAKDWRMDKYLRNLEAMLIVTDGETLLVLTGAGDVLEPEHDVTAIGSGGNFALAAARGLMATDLPAEEIARKAMAIAADICVYTNGNLTVERISK.

Threonine 12 is an active-site residue. Residues alanine 168, cysteine 171, and threonine 174 each coordinate Na(+).

Belongs to the peptidase T1B family. HslV subfamily. In terms of assembly, a double ring-shaped homohexamer of HslV is capped on each side by a ring-shaped HslU homohexamer. The assembly of the HslU/HslV complex is dependent on binding of ATP.

It localises to the cytoplasm. It catalyses the reaction ATP-dependent cleavage of peptide bonds with broad specificity.. With respect to regulation, allosterically activated by HslU binding. Its function is as follows. Protease subunit of a proteasome-like degradation complex believed to be a general protein degrading machinery. The polypeptide is ATP-dependent protease subunit HslV (Cereibacter sphaeroides (strain ATCC 17023 / DSM 158 / JCM 6121 / CCUG 31486 / LMG 2827 / NBRC 12203 / NCIMB 8253 / ATH 2.4.1.) (Rhodobacter sphaeroides)).